We begin with the raw amino-acid sequence, 470 residues long: Putative multidrug resistance protein MdtD (470 aa).

The Periplasmic portion of the chain corresponds to 1–11; the sequence is MTELPDNTRWQ. Residues 12–32 traverse the membrane as a helical segment; the sequence is LWIVALGFFMQSLDTTIVNTA. Residues 33–48 are Cytoplasmic-facing; it reads LPSMAKSLGESPLHMH. A helical transmembrane segment spans residues 49–69; the sequence is MVVVSYVLTVAVMLPASGWLA. Over 70–76 the chain is Periplasmic; it reads DKIGVRN. A helical transmembrane segment spans residues 77-97; the sequence is IFFAAIVLFTLGSLFCALSGT. At 98–101 the chain is on the cytoplasmic side; that stretch reads LNQL. The helical transmembrane segment at 102–124 threads the bilayer; the sequence is VLARVLQGVGGAMMVPVGRLTVM. Topologically, residues 125–137 are periplasmic; that stretch reads KIVPRAQYMAAMT. A helical transmembrane segment spans residues 138–158; the sequence is FVTLPGQIGPLLGPALGGVLV. Topologically, residues 159-164 are cytoplasmic; that stretch reads EYASWH. The helical transmembrane segment at 165–185 threads the bilayer; that stretch reads WIFLINIPVGIVGAMATFMLM. At 186–196 the chain is on the periplasmic side; sequence PNYTIETRRFD. A helical transmembrane segment spans residues 197–217; sequence LPGFLLLAIGMAVLTLALDGS. Over 218 to 221 the chain is Cytoplasmic; sequence KSMG. Residues 222–242 form a helical membrane-spanning segment; sequence ISPWTLAGLAAGGAAAILLYL. Residues 243-262 lie on the Periplasmic side of the membrane; it reads LHAKKNSGALFSLRLFCTPT. A helical membrane pass occupies residues 263–283; it reads FSLGLLGSFAGRIGSGMLPFM. Residues 284–285 are Cytoplasmic-facing; it reads TP. A helical membrane pass occupies residues 286 to 306; it reads VFLQIGLGFSPFHAGLMMIPM. Residues 307-341 are Periplasmic-facing; that stretch reads VLGSMGMKRIVVQIVNRFGYRRVLVATTLGLALVS. Residues 342 to 362 traverse the membrane as a helical segment; sequence LLFMSVALLGWYYLLPLVLLL. Topologically, residues 363–395 are cytoplasmic; the sequence is QGMVNSARFSSMNTLTLKDLPDTLASSGNSLLS. The helical transmembrane segment at 396 to 416 threads the bilayer; it reads MIMQLSMSIGVTIAGMLLGMF. The Periplasmic portion of the chain corresponds to 417–430; that stretch reads GQQHIGIDSSATHH. The helical transmembrane segment at 431–451 threads the bilayer; that stretch reads VFMYTWLCMAVIIALPAIIFA. The Cytoplasmic portion of the chain corresponds to 452 to 470; that stretch reads RVPNDTQQNMVISRRKRSL.

This sequence belongs to the major facilitator superfamily. TCR/Tet family.

Its subcellular location is the cell inner membrane. This Salmonella paratyphi B (strain ATCC BAA-1250 / SPB7) protein is Putative multidrug resistance protein MdtD.